The sequence spans 679 residues: Glycine--tRNA ligase beta subunit (679 aa).

Belongs to the class-II aminoacyl-tRNA synthetase family. In terms of assembly, tetramer of two alpha and two beta subunits.

It localises to the cytoplasm. The catalysed reaction is tRNA(Gly) + glycine + ATP = glycyl-tRNA(Gly) + AMP + diphosphate. The chain is Glycine--tRNA ligase beta subunit from Thermodesulfovibrio yellowstonii (strain ATCC 51303 / DSM 11347 / YP87).